The chain runs to 209 residues: LexA repressor (209 aa).

A DNA-binding region (H-T-H motif) is located at residues 32–52; that stretch reads VREIGKAVDLSSTSTVHGHLA. Active-site for autocatalytic cleavage activity residues include serine 131 and lysine 169.

It belongs to the peptidase S24 family. In terms of assembly, homodimer.

It carries out the reaction Hydrolysis of Ala-|-Gly bond in repressor LexA.. In terms of biological role, represses a number of genes involved in the response to DNA damage (SOS response), including recA and lexA. In the presence of single-stranded DNA, RecA interacts with LexA causing an autocatalytic cleavage which disrupts the DNA-binding part of LexA, leading to derepression of the SOS regulon and eventually DNA repair. The chain is LexA repressor from Enterococcus faecalis (strain ATCC 700802 / V583).